A 108-amino-acid polypeptide reads, in one-letter code: Synaptobrevin-1 (108 aa).

Residues 1–25 (MDAQGDAGAQGGSQGPRPSNKRLQQ) form a disordered region. At 1–85 (MDAQGDAGAQ…KRKYWWKNIK (85 aa)) the chain is on the cytoplasmic side. The v-SNARE coiled-coil homology domain occupies 22–82 (RLQQTQAQVD…ATLKRKYWWK (61 aa)). Residues 86 to 106 (MMIIMCAIVVILIIIIVLWAG) form a helical; Anchor for type IV membrane protein membrane-spanning segment. Over 107–108 (GK) the chain is Extracellular.

Belongs to the synaptobrevin family. As to quaternary structure, part of the SNARE core complex containing CBG09569/SNAP25, snb-1/VAMP2 and CBG03570/STX1A. This complex binds to cpx-1/CPLX1.

It is found in the cytoplasmic vesicle. Its subcellular location is the secretory vesicle. The protein localises to the synaptic vesicle membrane. The protein resides in the cell membrane. It localises to the synapse. It is found in the synaptosome. Involved in the targeting and/or fusion of transport vesicles to their target membrane. Acts in neuronal exocytosis of synaptic transmission. Likely to have a role in cholinergic transmisson. Required for viability, coordinated movement and M3 pharynx motor neuron function. In Caenorhabditis briggsae, this protein is Synaptobrevin-1.